The chain runs to 725 residues: Nitrogen regulatory protein areA (725 aa).

3 disordered regions span residues 1-90 (MRLS…RTNS), 429-464 (NQGGTLGRAHGSAASVSEVRNQNQDPRRYGKVPRTA), and 479-524 (GSAS…PEPA). Residues 39–48 (PAEHSAHPSV) show a composition bias toward basic and acidic residues. Polar residues-rich tracts occupy residues 442–452 (ASVSEVRNQNQ) and 479–500 (GSASGLPTNHPSPSTLPESGLS). Residues 525–549 (CTNCFTQTTPLWRRNPEGQPLCNAC) form a GATA-type zinc finger. The segment at 574 to 714 (RSSANTLTVG…NHSIAGGQGA (141 aa)) is disordered. Composition is skewed to polar residues over residues 575–584 (SSANTLTVGT) and 597–624 (IQHAPSTSISSRMNTSESPPSINGSSTL). Composition is skewed to low complexity over residues 631 to 656 (PIAAAPPKSGPPAGVAQARAGVQVAP) and 678 to 704 (KSAAPPSRSKVVPLAPAMAPPAAANPA).

It localises to the nucleus. Functionally, major nitrogen regulatory protein. This chain is Nitrogen regulatory protein areA (AREA), found in Penicillium chrysogenum (Penicillium notatum).